The following is a 50-amino-acid chain: Large ribosomal subunit protein bL33B (50 aa).

Belongs to the bacterial ribosomal protein bL33 family.

This chain is Large ribosomal subunit protein bL33B, found in Streptococcus agalactiae serotype V (strain ATCC BAA-611 / 2603 V/R).